A 236-amino-acid chain; its full sequence is Alpha-S2-casein (236 aa).

Residues 1–15 form the signal peptide; the sequence is MKFFIFTCLLAVALA. S23, S24, S25, S28, S47, S80, S81, S82, S85, S157, and S169 each carry phosphoserine. Residues 72–93 are disordered; sequence PTEVYSSSSSSEESAKFPTERE. Residues 84–93 are compositionally biased toward basic and acidic residues; that stretch reads ESAKFPTERE.

It belongs to the alpha-casein family. There are at least three different forms found in milk, with varying degrees of phosphorylation. These include form 10-P which is phosphorylated at ten sites that have not been determined, form 11-P which is phosphorylated at eleven sites and form 12-P which is phosphorylated at twelve sites. As to expression, mammary gland specific. Secreted in milk.

It is found in the secreted. Important role in the capacity of milk to transport calcium phosphate. This is Alpha-S2-casein from Equus asinus (Donkey).